The sequence spans 146 residues: Large ribosomal subunit protein bL9 (146 aa).

It belongs to the bacterial ribosomal protein bL9 family.

Its function is as follows. Binds to the 23S rRNA. The polypeptide is Large ribosomal subunit protein bL9 (Symbiobacterium thermophilum (strain DSM 24528 / JCM 14929 / IAM 14863 / T)).